Here is a 263-residue protein sequence, read N- to C-terminus: Type-2Ba cytolytic delta-endotoxin (263 aa).

It belongs to the cyt1/cyt2 endotoxin family. In terms of processing, active after proteolytic processing.

Kills the larvae of dipteran insects by making pores in the epithelial cell membrane of the insect midgut. The protein is Type-2Ba cytolytic delta-endotoxin (cyt2Ba1) of Bacillus thuringiensis subsp. israelensis.